Consider the following 104-residue polypeptide: MAVRKLWKTVVQLFSKSKSEECNTEAGTMEVSCLKYGVQGLNADCSYVKSQCIKLSECECLYTFASDVCKEDFHNSEEMKVFVVQHSQEIVGGTDFSVHAEESV.

Residues 37–54 traverse the membrane as a helical segment; it reads GVQGLNADCSYVKSQCIK.

Its subcellular location is the host membrane. In Human herpesvirus 6B (HHV-6 variant B), this protein is Protein U9 (U9).